Here is a 366-residue protein sequence, read N- to C-terminus: Probable protein arginine N-methyltransferase 1.2 (366 aa).

An SAM-dependent MTase PRMT-type domain is found at 45–347; that stretch reads ADYYFDSYSH…NPRDVDIKLS (303 aa). Residues E157 and E166 contribute to the active site.

Belongs to the class I-like SAM-binding methyltransferase superfamily. Protein arginine N-methyltransferase family. As to quaternary structure, interacts with FIB2 and PRMT11.

The protein resides in the nucleus. The protein localises to the cytoplasm. Functionally, methylates (mono and asymmetric dimethylation) the guanidino nitrogens of arginyl residues present in a glycine and arginine-rich domain. Type I arginine methyltransferase active on both histones and non-histone proteins. Mediates the methylation of MED36A. The chain is Probable protein arginine N-methyltransferase 1.2 (PRMT12) from Arabidopsis thaliana (Mouse-ear cress).